Here is a 116-residue protein sequence, read N- to C-terminus: Ribonuclease P protein component (116 aa).

The protein belongs to the RnpA family. As to quaternary structure, consists of a catalytic RNA component (M1 or rnpB) and a protein subunit.

The catalysed reaction is Endonucleolytic cleavage of RNA, removing 5'-extranucleotides from tRNA precursor.. Its function is as follows. RNaseP catalyzes the removal of the 5'-leader sequence from pre-tRNA to produce the mature 5'-terminus. It can also cleave other RNA substrates such as 4.5S RNA. The protein component plays an auxiliary but essential role in vivo by binding to the 5'-leader sequence and broadening the substrate specificity of the ribozyme. This chain is Ribonuclease P protein component, found in Picosynechococcus sp. (strain ATCC 27264 / PCC 7002 / PR-6) (Agmenellum quadruplicatum).